Reading from the N-terminus, the 720-residue chain is MMNASTKFSDNYDVKEELGKGAFSVVRRCVHKTTGLEFAAKIINTKKLSARDFQKLEREARICRKLQHPNIVRLHDSIQEESFHYLVFDLVTGGELFEDIVAREFYSEADASHCIQQILESIAYCHSNGIVHRDLKPENLLLASKAKGAAVKLADFGLAIEVNDSEAWHGFAGTPGYLSPEVLKKDPYSKPVDIWACGVILYILLVGYPPFWDEDQHRLYAQIKAGAYDYPSPEWDTVTPEAKSLIDSMLTVNPKKRITADQALKVPWICNRERVASAIHRQDTVDCLKKFNARRKLKAAISAVKMVTRMSGVLRTSDSTGSVASNGSTTHDASQVAGTSSQPTSPAAEVYPNVLLFNPQKFPRNCVHPFTTHPYYSPKESSKKKLFFTLLFEVCPHTSRSHILLRDNTKNIYHPYHCFTNKMSNYERAAPSSHGSSTTKKIANAIADLVIRRSSPSIRRKTEADVHNSNRNRKVSAPANLQHALVPVIDVVVATGALASSSVDNLSASTSSDLGRNLLNKKEQGPPSTIKESSESSQTIDDNDSEKGGGQLKHENTVVRADGATGIVSSSNSSTASKSSSTNLSAQKQDIVRVTQTLLDAISCKDFETYTRLCDTSMTCFEPEALGNLIEGIEFHRFYFDGNRKNQVHTTMLNPNVHIIGEDAACVAYVKLTQFLDRNGEAHTRQSQESRVWSKKQGRWVCVHVHRSTQPSTNTTVSEF.

The region spanning 12–269 (YDVKEELGKG…ADQALKVPWI (258 aa)) is the Protein kinase domain. ATP is bound by residues 18 to 26 (LGKGAFSVV) and lysine 41. Residue aspartate 134 is the Proton acceptor of the active site. Threonine 284 is subject to Phosphothreonine; by autocatalysis. Disordered regions lie at residues 317–345 (SDSTGSVASNGSTTHDASQVAGTSSQPTS) and 504–586 (DNLS…NLSA). 2 stretches are compositionally biased toward polar residues: residues 504-514 (DNLSASTSSDL) and 526-540 (PPSTIKESSESSQTI). Low complexity predominate over residues 569-586 (SSSNSSTASKSSSTNLSA).

This sequence belongs to the protein kinase superfamily. CAMK Ser/Thr protein kinase family. CaMK subfamily. Dodecamer. Subunits are tightly packed around a central ring-shaped scaffold with extensive contacts between the regulatory segment of one kinase and the catalytic domain of another enabling cooperative activation of a subunit by the adjacent molecule. Interacts with and phosphorylates daf-16; the interaction promotes daf-16 nuclear localization. Interacts with egl-2 and tir-1. Interacts with nsy-1. Mg(2+) serves as cofactor. As to expression, expressed in the nervous system. Observed in the ADF and AWC neurons. Position in AWC neurons is regulated by microtubules. Localized to clusters in ventral cord neurites which appear to be required for glr-1 trafficking. Also present in oocytes.

The protein localises to the cytoplasm. It is found in the cell projection. Its subcellular location is the axon. The protein resides in the perikaryon. It carries out the reaction L-seryl-[protein] + ATP = O-phospho-L-seryl-[protein] + ADP + H(+). The catalysed reaction is L-threonyl-[protein] + ATP = O-phospho-L-threonyl-[protein] + ADP + H(+). With respect to regulation, ca2(+)/calmodulin binding removes an autoinhibitory regulatory segment located C-terminal to the kinase domain. This releases the catalytic activity of the enzyme and makes accessible a regulatory residue Thr-284. Phosphorylation of Thr-284 by another kinase domain within the oligomeric holoenzyme keeps CaMKII active in the absence of Ca(2+)/calmodulin by preventing the rebinding of the regulatory segment to the kinase domain and by increasing the affinity of calmodulin for the enzyme. Can respond to high-frequency Ca(2+) pulses to become Ca(2+) independent. Functionally, acts in the signaling of a variety of pathways and processes. Phosphorylates 'Ser-319' of daf-16 in response to stress signals, such as heat, starvation and oxidation, which plays a role in prolonging lifespan. Required for viability under chronic osmotic stress in which it acts downstream of osr-1. Has roles in locomotion, oocyte maturation, brood size, egg laying, defecation, meiotic maturation and neuronal cell fate specification. Required for the regulation of synaptic density and neuromuscular junction morphology. Regulates the synaptic trafficking of glr-1. Bidirectional modulator of neurotransmitter release with negative modulatory effects mainly mediated via slo-1 activation. Involved in activation of ADF neurons and increased tph-1 transcription following exposure to pathogenic bacteria which leads to learned olfactory aversion to the bacteria. Implicated in the muscle regulation of spicule protraction. In conjunction with egl-2 has a role in the suppression of mating behavior under food deprivation to encourage foraging. Involved in restricting str-2 expression to only one of the two AWC neurons. May suppress the functional response to an internal pacemaker, perhaps by modulating the activity of the IP3 receptor. The polypeptide is Calcium/calmodulin-dependent protein kinase type II (unc-43) (Caenorhabditis elegans).